The primary structure comprises 139 residues: Nucleoside diphosphate kinase (139 aa).

Residues Lys-10, Phe-58, Arg-86, Thr-92, Arg-103, and Asn-113 each contribute to the ATP site. His-116 serves as the catalytic Pros-phosphohistidine intermediate.

This sequence belongs to the NDK family. In terms of assembly, homotetramer. Mg(2+) serves as cofactor.

It localises to the cytoplasm. It catalyses the reaction a 2'-deoxyribonucleoside 5'-diphosphate + ATP = a 2'-deoxyribonucleoside 5'-triphosphate + ADP. The catalysed reaction is a ribonucleoside 5'-diphosphate + ATP = a ribonucleoside 5'-triphosphate + ADP. Functionally, major role in the synthesis of nucleoside triphosphates other than ATP. The ATP gamma phosphate is transferred to the NDP beta phosphate via a ping-pong mechanism, using a phosphorylated active-site intermediate. The polypeptide is Nucleoside diphosphate kinase (Caulobacter sp. (strain K31)).